Consider the following 252-residue polypeptide: Carboxy-S-adenosyl-L-methionine synthase (252 aa).

Residues Tyr-45, 70–72 (GCS), 95–96 (DN), 127–128 (DI), Asn-142, and Arg-209 each bind S-adenosyl-L-methionine.

It belongs to the class I-like SAM-binding methyltransferase superfamily. Cx-SAM synthase family. Homodimer.

It carries out the reaction prephenate + S-adenosyl-L-methionine = carboxy-S-adenosyl-L-methionine + 3-phenylpyruvate + H2O. In terms of biological role, catalyzes the conversion of S-adenosyl-L-methionine (SAM) to carboxy-S-adenosyl-L-methionine (Cx-SAM). This chain is Carboxy-S-adenosyl-L-methionine synthase, found in Pseudomonas paraeruginosa (strain DSM 24068 / PA7) (Pseudomonas aeruginosa (strain PA7)).